The primary structure comprises 266 residues: Putative peptidyl-prolyl cis-trans isomerase NifM (266 aa).

Residues 124–221 enclose the PpiC domain; it reads PEQRLTRHLL…LGWHLLWCEA (98 aa).

Belongs to the PpiC/parvulin rotamase family.

The catalysed reaction is [protein]-peptidylproline (omega=180) = [protein]-peptidylproline (omega=0). Its function is as follows. Required for the activation and stabilization of the iron-component (NifH) of nitrogenase. Probable PPIase. The polypeptide is Putative peptidyl-prolyl cis-trans isomerase NifM (nifM) (Klebsiella oxytoca).